The primary structure comprises 485 residues: MAYKGWNSDSFSMNSELFNEILLYAHLDSSGIDSDDLNTNPNTLENEINSVEKTLNIEELKKITTALNIDNRCNICSIINICLRHETDKMWIYDYALLCYKCNAAPRTPLAVVIIATEFMQLIQKHFLNINFDGLFLNNILSILDFHVHFFINRCFSNTNDDLLHNENITLYHMAILKSLLLEDESIPNIRIKKFKLKGKPTKKQHGNAILEKQTLPLNTHFTHLIFYMWAGTNIFDRISLTDLAIKKRQILKAIYSTKNELNCSAGPILLSQIPISITKNATSSVCLLCELMTSSQKNFDLLQFIYTSVINYCQNNLKMIDRIQFVLANLLDLARIYTNVKTTSDCSKIVLANEQEFSNSDFVIDCHSFLILKQVGPVGLYKHFFCDPLCIANIKTIKPHILFYTTESCILQDFKVAICYQNEYLNSVEKHVWLAIHFFKAFQVSKLNHKNKTLISDFLKDFTQLLADQNFEIVDPTFTIHYYV.

The Zn(2+) site is built by Cys73, Cys76, His149, Cys155, Cys287, Cys290, His384, and Cys391. 2 zinc finger regions span residues 73-155 and 287-391; these read CNIC…INRC and CLLC…DPLC.

The protein belongs to the herpesviridae UL32 protein family.

It localises to the host cytoplasm. The protein resides in the host nucleus. Functionally, plays a role in efficient localization of neo-synthesized capsids to nuclear replication compartments, thereby controlling cleavage and packaging of virus genomic DNA. The polypeptide is Packaging protein UL32 (U36) (Human herpesvirus 7 (strain JI) (HHV-7)).